Here is a 492-residue protein sequence, read N- to C-terminus: Dipeptide permease D (492 aa).

The next 13 helical transmembrane spans lie at 14-34 (VVAL…LLIL), 49-69 (ALFS…GYLA), 91-111 (LVLG…AIIV), 138-158 (GGFS…PIAC), 167-187 (WAMG…IFLC), 212-232 (NWGW…VLFW), 236-256 (SVYA…RIYL), 269-289 (LIVV…QGGS), 312-332 (MFQS…AWLV), 344-364 (IWGK…ILTL), 379-399 (LMVL…PVAM), 413-433 (VLTG…AGVI), and 458-478 (VFSQ…VIWL).

It belongs to the major facilitator superfamily. Proton-dependent oligopeptide transporter (POT/PTR) (TC 2.A.17) family. DtpD subfamily.

It localises to the cell inner membrane. In terms of biological role, probable proton-dependent permease that transports dipeptides. The protein is Dipeptide permease D of Klebsiella pneumoniae subsp. pneumoniae (strain ATCC 700721 / MGH 78578).